Here is a 784-residue protein sequence, read N- to C-terminus: Kinesin-like protein 6 (784 aa).

The Kinesin motor domain occupies Ser-6–Ile-389. Gly-134–Thr-141 provides a ligand contact to ATP. Coiled-coil stretches lie at residues Ser-405–Lys-440 and Arg-463–Ile-483. The segment at Ser-677–Leu-715 is disordered. Over residues Ile-690–Asn-709 the composition is skewed to basic and acidic residues.

Belongs to the TRAFAC class myosin-kinesin ATPase superfamily. Kinesin family. Kinesin II subfamily. In terms of assembly, heterodimer with klp5.

The protein resides in the cytoplasm. Its subcellular location is the cytoskeleton. It localises to the chromosome. It is found in the centromere. The protein localises to the kinetochore. The protein resides in the spindle. Its function is as follows. Has a role in establishing metaphase during mitosis. Required for chromosome segregation where it generates tension during kinetochore capturing. This chain is Kinesin-like protein 6 (klp6), found in Schizosaccharomyces pombe (strain 972 / ATCC 24843) (Fission yeast).